A 389-amino-acid polypeptide reads, in one-letter code: Type III polyketide synthase 21 (389 aa).

C170 (nucleophile) is an active-site residue.

The protein belongs to the thiolase-like superfamily. Chalcone/stilbene synthases family. In terms of tissue distribution, expressed in anthers. Expressed in young and adult flowers.

In terms of biological role, plant type III polyketide synthases (PKSs) that catalyzes the condensation of fatty acyl-CoA with malonyl-CoA to generate triketide and tetraketide alpha-pyrones, the main components of pollen exine and potential sporopollenin precursors. In Oryza sativa subsp. japonica (Rice), this protein is Type III polyketide synthase 21 (PKS21).